The following is a 400-amino-acid chain: Leukosialin (400 aa).

An N-terminal signal peptide occupies residues 1 to 19 (MATLLLLLGVLVVSPDALG). Residues 20 to 253 (STTAVQTPTS…PFRNPDENSR (234 aa)) lie on the Extracellular side of the membrane. Threonine 21, threonine 22, threonine 26, and threonine 28 each carry an O-linked (GalNAc...) threonine glycan. Polar residues-rich tracts occupy residues 21–51 (TTAV…SITS) and 58–112 (TGDQ…TPHA). The disordered stretch occupies residues 21–224 (TTAVQTPTSG…SSGASGPQVS (204 aa)). Residues serine 29 and serine 35 are each glycosylated (O-linked (GalNAc...) serine). An O-linked (GalNAc...) threonine glycan is attached at threonine 36. Residues serine 37, serine 41, and serine 42 are each glycosylated (O-linked (GalNAc...) serine). Residues threonine 46 and threonine 47 are each glycosylated (O-linked (GalNAc...) threonine). An O-linked (GalNAc...) serine glycan is attached at serine 48. O-linked (GalNAc...) threonine glycosylation is found at threonine 50, threonine 58, and threonine 69. O-linked (GalNAc...) serine glycosylation is found at serine 99 and serine 103. Residues threonine 109 and threonine 113 are each glycosylated (O-linked (GalNAc...) threonine). O-linked (GalNAc...) serine glycosylation occurs at serine 114. Composition is skewed to polar residues over residues 121–164 (TANS…SRGT) and 172–182 (ATVSLETSKGT). O-linked (GalNAc...) threonine glycosylation is found at threonine 136, threonine 137, threonine 173, and threonine 178. A compositionally biased stretch (low complexity) spans 196-211 (TSTGTTGPPVTMTTGS). Positions 212–224 (LEPSSGASGPQVS) are enriched in polar residues. The N-linked (GlcNAc...) asparagine glycan is linked to asparagine 239. The helical transmembrane segment at 254-276 (GMLPVAVLVALLAVIVLVALLLL) threads the bilayer. Over 277-400 (WRRRQKRRTG…EPEGGDGAAP (124 aa)) the chain is Cytoplasmic. A required for interaction with EZR, MSN and RDX and for co-localization to microvilli region spans residues 278 to 308 (RRRQKRRTGALVLSRGGKRNGVVDAWAGPAQ). Positions 282–296 (KRRTGALVLSRGGKR) match the Nuclear localization signal motif. At serine 291 the chain carries Phosphoserine. The segment covering 320-332 (GGSGGDKGSGFPD) has biased composition (gly residues). Residues 320-400 (GGSGGDKGSG…EPEGGDGAAP (81 aa)) form a disordered region. Serine 336 carries the phosphoserine modification. Threonine 341 bears the Phosphothreonine mark. At serine 351 the chain carries Phosphoserine. Serine 355 carries the post-translational modification Phosphoserine; by PKC/PRKCQ. Residues serine 368 and serine 379 each carry the phosphoserine modification.

As to quaternary structure, interacts with SIGLEC1. Monomer. Interacts with CTNNB1. Interacts with RDX (via FERM domain), EZR and MSN. Post-translationally, glycosylated; has a high content of sialic acid and O-linked carbohydrate structures. In terms of processing, phosphorylation at Ser-355 is regulated by chemokines, requires its association with ERM proteins (EZR, RDX and MSN) and is essential for its function in the regulation of T-cell trafficking to lymph nodes. Has a high content of sialic acid and O-linked carbohydrate structures. Post-translationally, cleavage by CTSG releases its extracellular domain and triggers its intramembrane proteolysis by gamma-secretase releasing the CD43 cytoplasmic tail chain (CD43-ct) which translocates to the nucleus. In terms of processing, sumoylated. In terms of tissue distribution, cell surface of thymocytes, T-lymphocytes, neutrophils, plasma cells and myelomas.

It is found in the membrane. The protein localises to the cell projection. The protein resides in the microvillus. It localises to the uropodium. Its subcellular location is the nucleus. It is found in the PML body. Predominant cell surface sialoprotein of leukocytes which regulates multiple T-cell functions, including T-cell activation, proliferation, differentiation, trafficking and migration. Positively regulates T-cell trafficking to lymph-nodes via its association with ERM proteins (EZR, RDX and MSN). Negatively regulates Th2 cell differentiation and predisposes the differentiation of T-cells towards a Th1 lineage commitment. Promotes the expression of IFN-gamma by T-cells during T-cell receptor (TCR) activation of naive cells and induces the expression of IFN-gamma by CD4(+) T-cells and to a lesser extent by CD8(+) T-cells. Plays a role in preparing T-cells for cytokine sensing and differentiation into effector cells by inducing the expression of cytokine receptors IFNGR and IL4R, promoting IFNGR and IL4R signaling and by mediating the clustering of IFNGR with TCR. Acts as a major E-selectin ligand responsible for Th17 cell rolling on activated vasculature and recruitment during inflammation. Mediates Th17 cells, but not Th1 cells, adhesion to E-selectin. Acts as a T-cell counter-receptor for SIGLEC1. Its function is as follows. Protects cells from apoptotic signals, promoting cell survival. The chain is Leukosialin (SPN) from Homo sapiens (Human).